A 113-amino-acid polypeptide reads, in one-letter code: UPF0482 protein YnfB (113 aa).

The first 28 residues, 1–28, serve as a signal peptide directing secretion; it reads MNILSGKLPFLLGAVFAGSVVLATSVQA.

Belongs to the UPF0482 family.

This chain is UPF0482 protein YnfB, found in Escherichia fergusonii (strain ATCC 35469 / DSM 13698 / CCUG 18766 / IAM 14443 / JCM 21226 / LMG 7866 / NBRC 102419 / NCTC 12128 / CDC 0568-73).